Consider the following 225-residue polypeptide: Glutathione S-transferase Mu 5 (225 aa).

Residues 5-92 (KSMVLGYWDI…YIARKHNMCG (88 aa)) enclose the GST N-terminal domain. At S6 the chain carries Phosphoserine. Residues 11-12 (YW), 50-54 (WLDVK), 63-64 (NL), and 76-77 (QS) contribute to the glutathione site. The 119-residue stretch at 94-212 (TEEEKIRVDI…QSDRCFKMPI (119 aa)) folds into the GST C-terminal domain. Y120 is a substrate binding site.

The protein belongs to the GST superfamily. Mu family. Homodimer. The N-terminus is blocked. In terms of tissue distribution, expressed in testis and brain. Very low expression in liver, kidney, heart and lung.

The protein localises to the cytoplasm. It carries out the reaction RX + glutathione = an S-substituted glutathione + a halide anion + H(+). Functionally, conjugation of reduced glutathione to a wide number of exogenous and endogenous hydrophobic electrophiles. The protein is Glutathione S-transferase Mu 5 (Gstm5) of Rattus norvegicus (Rat).